The chain runs to 441 residues: MAGPPASLSARDVGSFAYLSVKDRSPQILTKAIDTLHRHKSEFFEKHGEKGLEAEKKAISLLSKLRNELQTDKPIVPLVEKFVDTDIWNQYLEYQQSLLNESDGKPRWFLSPWLFVECYMYRRIHEAIIQSPPIDDFDIFKEFKDQNFFESQESIIALCTHLQELRKTIEDLDENQLKNEFFKVLQISLWGNKCDLSLSGGEHISQKTNIMNSLEDLKPFILVNDMDRLWSLLSNCKKTREKESVTRVDIVLDNSGFELITDLVLADFLLSSKLATKIHFYGKTIPWFVSDTTLHDFNWIIKQLKHSNNKWVSQCGVDWEDHVKTGRWVYLDHIFWTLPHEFSAMSQVAPDLHAALQKAHLIFFKGDLNYRKLTGDRRWEFTVPFHEALSGFHPAPLCSIRTLKAEVQVGLQPGQGEQLTASEPNWLTAGKYGVFQFDGPL.

A2 is subject to N-acetylalanine. K40 carries the post-translational modification N6-acetyllysine. S102 bears the Phosphoserine mark. Mn(2+) contacts are provided by D253 and N254. Substrate is bound at residue 253–254 (DN). 2 residues coordinate S-adenosyl-L-methionine: E258 and D291. A Mn(2+)-binding site is contributed by D291. Substrate contacts are provided by residues 367–371 (DLNYR) and K404. Residues 401–404 (RTLK) carry the Subfamily III RTxK motif motif.

It belongs to the damage-control phosphatase family. Sugar phosphate phosphatase III subfamily. It depends on Mn(2+) as a cofactor. The cofactor is Ni(2+). Post-translationally, automethylated.

The enzyme catalyses beta-D-fructose 1-phosphate + H2O = D-fructose + phosphate. It catalyses the reaction beta-D-fructose 6-phosphate = dihydroxyacetone + D-glyceraldehyde 3-phosphate. The catalysed reaction is L-glutamyl-[protein] + S-adenosyl-L-methionine = [protein]-L-glutamate 5-O-methyl ester + S-adenosyl-L-homocysteine. In terms of biological role, metal-dependent phosphatase that shows phosphatase activity against several substrates, including fructose-1-phosphate and fructose-6-phosphate. Its preference for fructose-1-phosphate, a strong glycating agent that causes DNA damage rather than a canonical yeast metabolite, suggests a damage-control function in hexose phosphate metabolism. Has also been shown to have O-methyltransferase activity that methylates glutamate residues of target proteins to form gamma-glutamyl methyl ester residues. Possibly methylates PCNA, suggesting it is involved in the DNA damage response. This is Damage-control phosphatase ARMT1 from Bos taurus (Bovine).